A 343-amino-acid chain; its full sequence is Serine/threonine-protein kinase SRK2C (343 aa).

In terms of domain architecture, Protein kinase spans 4–260; that stretch reads YEIVKDIGSG…IEEIKNHSWF (257 aa). ATP is bound by residues 10-18 and lysine 33; that span reads IGSGNFGVA. The Proton acceptor role is filled by aspartate 123. Threonine 158 bears the Phosphothreonine mark.

Belongs to the protein kinase superfamily. Ser/Thr protein kinase family. As to quaternary structure, interacts with I-2 and TOPP1. Expressed in seedlings.

The catalysed reaction is L-seryl-[protein] + ATP = O-phospho-L-seryl-[protein] + ADP + H(+). The enzyme catalyses L-threonyl-[protein] + ATP = O-phospho-L-threonyl-[protein] + ADP + H(+). In terms of biological role, involved in gene regulation and confers tolerance to drought and osmotic stress. The sequence is that of Serine/threonine-protein kinase SRK2C (SRK2C) from Arabidopsis thaliana (Mouse-ear cress).